The following is a 1382-amino-acid chain: DNA-directed RNA polymerase subunit beta'' (1382 aa).

Cys-224, Cys-294, Cys-301, and Cys-304 together coordinate Zn(2+).

The protein belongs to the RNA polymerase beta' chain family. RpoC2 subfamily. As to quaternary structure, in plastids the minimal PEP RNA polymerase catalytic core is composed of four subunits: alpha, beta, beta', and beta''. When a (nuclear-encoded) sigma factor is associated with the core the holoenzyme is formed, which can initiate transcription. The cofactor is Zn(2+).

It is found in the plastid. It localises to the chloroplast. The catalysed reaction is RNA(n) + a ribonucleoside 5'-triphosphate = RNA(n+1) + diphosphate. DNA-dependent RNA polymerase catalyzes the transcription of DNA into RNA using the four ribonucleoside triphosphates as substrates. The polypeptide is DNA-directed RNA polymerase subunit beta'' (Dioscorea elephantipes (Elephant's foot yam)).